The following is a 377-amino-acid chain: Putative glutamate--cysteine ligase 2 (377 aa).

The protein belongs to the glutamate--cysteine ligase type 2 family. YbdK subfamily.

The enzyme catalyses L-cysteine + L-glutamate + ATP = gamma-L-glutamyl-L-cysteine + ADP + phosphate + H(+). Its function is as follows. ATP-dependent carboxylate-amine ligase which exhibits weak glutamate--cysteine ligase activity. In Ralstonia pickettii (strain 12J), this protein is Putative glutamate--cysteine ligase 2.